A 240-amino-acid chain; its full sequence is Ubiquinone biosynthesis O-methyltransferase (240 aa).

S-adenosyl-L-methionine contacts are provided by arginine 36, glycine 66, aspartate 87, and methionine 129.

This sequence belongs to the methyltransferase superfamily. UbiG/COQ3 family.

The catalysed reaction is a 3-demethylubiquinol + S-adenosyl-L-methionine = a ubiquinol + S-adenosyl-L-homocysteine + H(+). It carries out the reaction a 3-(all-trans-polyprenyl)benzene-1,2-diol + S-adenosyl-L-methionine = a 2-methoxy-6-(all-trans-polyprenyl)phenol + S-adenosyl-L-homocysteine + H(+). It participates in cofactor biosynthesis; ubiquinone biosynthesis. Its function is as follows. O-methyltransferase that catalyzes the 2 O-methylation steps in the ubiquinone biosynthetic pathway. The chain is Ubiquinone biosynthesis O-methyltransferase from Pelagibacter ubique (strain HTCC1062).